Here is a 271-residue protein sequence, read N- to C-terminus: Phosphatidylglycerol--prolipoprotein diacylglyceryl transferase (271 aa).

7 helical membrane passes run 25-45, 60-80, 103-123, 134-154, 181-201, 209-229, and 235-255; these read WYGI…KFFV, YFIW…ILIY, FVGI…IATL, WIFL…GRIG, PSQL…VYLA, GELI…CEFY, and GIGF…IMFI. R152 serves as a coordination point for a 1,2-diacyl-sn-glycero-3-phospho-(1'-sn-glycerol).

The protein belongs to the Lgt family.

The protein resides in the cell inner membrane. The enzyme catalyses L-cysteinyl-[prolipoprotein] + a 1,2-diacyl-sn-glycero-3-phospho-(1'-sn-glycerol) = an S-1,2-diacyl-sn-glyceryl-L-cysteinyl-[prolipoprotein] + sn-glycerol 1-phosphate + H(+). It participates in protein modification; lipoprotein biosynthesis (diacylglyceryl transfer). In terms of biological role, catalyzes the transfer of the diacylglyceryl group from phosphatidylglycerol to the sulfhydryl group of the N-terminal cysteine of a prolipoprotein, the first step in the formation of mature lipoproteins. In Campylobacter jejuni subsp. jejuni serotype O:6 (strain 81116 / NCTC 11828), this protein is Phosphatidylglycerol--prolipoprotein diacylglyceryl transferase.